A 138-amino-acid chain; its full sequence is Putative pre-16S rRNA nuclease (138 aa).

The protein belongs to the YqgF nuclease family.

Its subcellular location is the cytoplasm. Its function is as follows. Could be a nuclease involved in processing of the 5'-end of pre-16S rRNA. In Clostridium tetani (strain Massachusetts / E88), this protein is Putative pre-16S rRNA nuclease.